A 246-amino-acid chain; its full sequence is Ribonuclease PH (246 aa).

Phosphate contacts are provided by residues Arg86 and 124 to 126; that span reads GTR.

This sequence belongs to the RNase PH family. As to quaternary structure, homohexameric ring arranged as a trimer of dimers.

It carries out the reaction tRNA(n+1) + phosphate = tRNA(n) + a ribonucleoside 5'-diphosphate. In terms of biological role, phosphorolytic 3'-5' exoribonuclease that plays an important role in tRNA 3'-end maturation. Removes nucleotide residues following the 3'-CCA terminus of tRNAs; can also add nucleotides to the ends of RNA molecules by using nucleoside diphosphates as substrates, but this may not be physiologically important. Probably plays a role in initiation of 16S rRNA degradation (leading to ribosome degradation) during starvation. This chain is Ribonuclease PH, found in Bacillus licheniformis (strain ATCC 14580 / DSM 13 / JCM 2505 / CCUG 7422 / NBRC 12200 / NCIMB 9375 / NCTC 10341 / NRRL NRS-1264 / Gibson 46).